A 123-amino-acid chain; its full sequence is Large ribosomal subunit protein bL12 (123 aa).

The protein belongs to the bacterial ribosomal protein bL12 family. In terms of assembly, homodimer. Part of the ribosomal stalk of the 50S ribosomal subunit. Forms a multimeric L10(L12)X complex, where L10 forms an elongated spine to which 2 to 4 L12 dimers bind in a sequential fashion. Binds GTP-bound translation factors.

Functionally, forms part of the ribosomal stalk which helps the ribosome interact with GTP-bound translation factors. Is thus essential for accurate translation. In Rickettsia bellii (strain OSU 85-389), this protein is Large ribosomal subunit protein bL12.